The primary structure comprises 165 residues: MRIGLYPGTFDPITLGHIDIIRRATLLVDRLVIGVAINRDKGPLFDLEERVAMIEAECAKLTEQTGTEIVVHPFENLLIDCARDVGAQVIVRGLRAVADFEYEFQMVGMNRALDDSIETVFLMAEARHQAIASKLVKEISRLGGDVSKFVTPLVRERLAERLGQR.

Thr9 provides a ligand contact to substrate. ATP-binding positions include 9–10 (TF) and His17. Substrate contacts are provided by Lys41, Leu78, and Arg92. ATP is bound by residues 93 to 95 (GLR), Glu103, and 128 to 134 (HQAIASK).

It belongs to the bacterial CoaD family. As to quaternary structure, homohexamer. Requires Mg(2+) as cofactor.

Its subcellular location is the cytoplasm. The enzyme catalyses (R)-4'-phosphopantetheine + ATP + H(+) = 3'-dephospho-CoA + diphosphate. It participates in cofactor biosynthesis; coenzyme A biosynthesis; CoA from (R)-pantothenate: step 4/5. In terms of biological role, reversibly transfers an adenylyl group from ATP to 4'-phosphopantetheine, yielding dephospho-CoA (dPCoA) and pyrophosphate. The sequence is that of Phosphopantetheine adenylyltransferase from Ruegeria sp. (strain TM1040) (Silicibacter sp.).